An 82-amino-acid chain; its full sequence is ATP synthase subunit c (82 aa).

2 helical membrane passes run 3 to 23 (PLIA…ASLG) and 57 to 77 (LAFM…LLFA).

F-type ATPases have 2 components, F(1) - the catalytic core - and F(0) - the membrane proton channel. F(1) has five subunits: alpha(3), beta(3), gamma(1), delta(1), epsilon(1). F(0) has four main subunits: a(1), b(1), b'(1) and c(10-14). The alpha and beta chains form an alternating ring which encloses part of the gamma chain. F(1) is attached to F(0) by a central stalk formed by the gamma and epsilon chains, while a peripheral stalk is formed by the delta, b and b' chains.

It is found in the cellular thylakoid membrane. Its activity is regulated as follows. Inhibited by dicyclohexylcarbodiimide. Functionally, f(1)F(0) ATP synthase produces ATP from ADP in the presence of a proton or sodium gradient. F-type ATPases consist of two structural domains, F(1) containing the extramembraneous catalytic core and F(0) containing the membrane proton channel, linked together by a central stalk and a peripheral stalk. During catalysis, ATP synthesis in the catalytic domain of F(1) is coupled via a rotary mechanism of the central stalk subunits to proton translocation. Its function is as follows. Key component of the F(0) channel; it plays a direct role in translocation across the membrane. A homomeric c-ring of between 10-14 subunits forms the central stalk rotor element with the F(1) delta and epsilon subunits. In terms of biological role, the complex from the organism is particularly stable to disruption and remains functional after 6 hrs at 55 degrees Celsius. The sequence is that of ATP synthase subunit c (atpE) from Thermosynechococcus vestitus (strain NIES-2133 / IAM M-273 / BP-1).